The primary structure comprises 223 residues: DNA replication complex GINS protein SLD5 (223 aa).

M1 carries the post-translational modification N-acetylmethionine. Position 2 is an N-acetylthreonine; in DNA replication complex GINS protein SLD5, N-terminally processed (T2). S12 and S16 each carry phosphoserine. The tract at residues 166-223 (DLDSYVFLRVKERQENILVEPEADEQRDYVIDLEVGSQHLIRYKTIAPLVASGAVQLI) is important for GINS complex assembly.

It belongs to the GINS4/SLD5 family. In terms of assembly, component of the CMG helicase complex, a hexameric ring of related MCM2-7 subunits stabilized by CDC45 and the tetrameric GINS complex. Associated with ORC2. Interacts with HELB. As to expression, highly abundant in testis. Weakly expressed in thymus and bone marrow.

It localises to the nucleus. It is found in the chromosome. The protein resides in the cytoplasm. Its function is as follows. Required for initiation of chromosomal DNA replication. Core component of CDC45-MCM-GINS (CMG) helicase, the molecular machine that unwinds template DNA during replication, and around which the replisome is built. This is DNA replication complex GINS protein SLD5 (Gins4) from Mus musculus (Mouse).